We begin with the raw amino-acid sequence, 100 residues long: Large ribosomal subunit protein uL23 (100 aa).

This sequence belongs to the universal ribosomal protein uL23 family. Part of the 50S ribosomal subunit. Contacts protein L29, and trigger factor when it is bound to the ribosome.

Its function is as follows. One of the early assembly proteins it binds 23S rRNA. One of the proteins that surrounds the polypeptide exit tunnel on the outside of the ribosome. Forms the main docking site for trigger factor binding to the ribosome. This chain is Large ribosomal subunit protein uL23, found in Idiomarina loihiensis (strain ATCC BAA-735 / DSM 15497 / L2-TR).